The sequence spans 329 residues: MNNFKLIVRKWYIPVLIISLITLVASAYALYWATIPETKETQISIRHYSALAYFSGGAEVKKDNPIWANGSFVTLPVYSYSLTPEYSGEFYFTTAPRGDITIETEAKIVYFYEVSDAPVWEKVYYAASNTSRGEIKTNFKINVTDLKSKINEAQNSFGVYLGKTGARIDVSVHYYGKITGKDVDETLSFKIPIDVQSTYYSFSTLNETRDFEMPSTRVVEVQKPLHMKVIPAALCTVSIIFAGLSVVYRTKYSDVSSLEREIERVSWEKKLKEVSFARMPETNLEMVEVERFEDISKAAEETFEHLFYDREKGVFFFIHGGVLYYCREK.

Helical transmembrane passes span 13 to 35 and 229 to 248; these read IPVL…WATI and VIPA…SVVY.

The protein resides in the cell membrane. This is an uncharacterized protein from Archaeoglobus fulgidus (strain ATCC 49558 / DSM 4304 / JCM 9628 / NBRC 100126 / VC-16).